Consider the following 524-residue polypeptide: MSAFKPYTEALEVLKKYEKKDGLSIDDLIRHNFQGGLTFNDFLILPGYIDFVPNNVSLETRISRNIVLKTPFMSSPMDTVTEDQMAIYMALLGGIGVIHHNCTPEEQAAMVRKVKKYENGFILDPVVFSPQHTVGDVLKIKETKGFSGIPITENGKLRGKLVGIVTSRDVQFHKDTNTPVTEVMTPREELITTAEGISLERANEMLRKSKKGKLPVVDKDDNLVALLSLTDLMKNLHFPLASKTSDTKQLMVAAAIGTRDDDRTRLALLAEAGLDAVVIDSSQGNSCFQIEMIKWIKKTYPKIDVIAGNVVTREQTASLIAAGADGLRVGMGSGSACITQEVMACGRPQATAIAQVAEFASQFGIGVIADGGIQNVGHMVKSLSLGATAVMMGGLLAGTTESPGEYYVREGQRYKSYRGMGSIAAMEGTGVNKNASTGRYFSENDAVRVAQGVSGLVVDKGSLLRFLPYLYTGLQHALQDIGTKSLDELHEAVDKHEVRFELRSSAAIREGDIQGFATYEKRLY.

CBS domains are found at residues 121-180 (FILD…NTPV) and 184-242 (MTPR…PLAS). NAD(+) is bound by residues 280-282 (DSS) and 330-332 (GMG). K(+) contacts are provided by G332 and G334. S335 serves as a coordination point for IMP. C337 is a K(+) binding site. C337 acts as the Thioimidate intermediate in catalysis. Residues 370-372 (DGG), 393-394 (GG), and 417-421 (YRGMG) contribute to the IMP site. R439 functions as the Proton acceptor in the catalytic mechanism. IMP is bound at residue Q451. Residues E510 and G511 each coordinate K(+).

It belongs to the IMPDH/GMPR family. As to quaternary structure, homotetramer. It depends on K(+) as a cofactor.

It localises to the cytoplasm. It catalyses the reaction IMP + NAD(+) + H2O = XMP + NADH + H(+). It participates in purine metabolism; XMP biosynthesis via de novo pathway; XMP from IMP: step 1/1. With respect to regulation, mycophenolic acid (MPA) is a non-competitive inhibitor that prevents formation of the closed enzyme conformation by binding to the same site as the amobile flap. In contrast, mizoribine monophosphate (MZP) is a competitive inhibitor that induces the closed conformation. MPA is a potent inhibitor of mammalian IMPDHs but a poor inhibitor of the bacterial enzymes. MZP is a more potent inhibitor of bacterial IMPDH. In terms of biological role, catalyzes the conversion of inosine 5'-phosphate (IMP) to xanthosine 5'-phosphate (XMP), the first committed and rate-limiting step in the de novo synthesis of guanine nucleotides, and therefore plays an important role in the regulation of cell growth. This is Inosine-5'-monophosphate dehydrogenase (gua1) from Schizosaccharomyces pombe (strain 972 / ATCC 24843) (Fission yeast).